We begin with the raw amino-acid sequence, 252 residues long: Phosphomannomutase (252 aa).

The Nucleophile role is filled by D13. Mg(2+)-binding residues include D13 and D15. D15 (proton donor/acceptor) is an active-site residue. R22, R124, R135, R142, S180, and D182 together coordinate alpha-D-mannose 1-phosphate. Positions 208, 220, and 225 each coordinate Mg(2+).

It belongs to the eukaryotic PMM family. As to quaternary structure, homodimer. Mg(2+) serves as cofactor. In terms of tissue distribution, expressed in roots, stems, leaves, flowers and immature fruits.

It localises to the cytoplasm. It catalyses the reaction alpha-D-mannose 1-phosphate = D-mannose 6-phosphate. It functions in the pathway nucleotide-sugar biosynthesis; GDP-alpha-D-mannose biosynthesis; alpha-D-mannose 1-phosphate from D-fructose 6-phosphate: step 2/2. Functionally, catalyzes the interconversion of mannose-6-phosphate to mannose-1-phosphate, the precursor for the synthesis of GDP-mannose. GDP-mannose is an essential sugar nucleotide for the synthesis of D-mannose-containing cell wall polysaccharides (galactomannans and glucomannans), glycolipids, glycoproteins and the antioxidant L-ascorbate. Can complement the yeast temperature-sensitive mutant sec53-6. The polypeptide is Phosphomannomutase (Nicotiana benthamiana).